The sequence spans 326 residues: 3-isopropylmalate dehydrogenase (326 aa).

Substrate-binding residues include arginine 81, arginine 91, arginine 112, and aspartate 198. The Mg(2+) site is built by aspartate 198, aspartate 222, and aspartate 226. 255 to 267 (GAAFDIAGKGIAN) contacts NAD(+).

Belongs to the isocitrate and isopropylmalate dehydrogenases family. As to quaternary structure, homotetramer. It depends on Mg(2+) as a cofactor. Mn(2+) serves as cofactor.

Its subcellular location is the cytoplasm. The catalysed reaction is (2R,3S)-3-isopropylmalate + NAD(+) = 4-methyl-2-oxopentanoate + CO2 + NADH. The protein operates within amino-acid biosynthesis; L-leucine biosynthesis; L-leucine from 3-methyl-2-oxobutanoate: step 3/4. Functionally, catalyzes the oxidation of 3-carboxy-2-hydroxy-4-methylpentanoate (3-isopropylmalate) to 3-carboxy-4-methyl-2-oxopentanoate. The product decarboxylates to 4-methyl-2 oxopentanoate. The sequence is that of 3-isopropylmalate dehydrogenase (leuB) from Archaeoglobus fulgidus (strain ATCC 49558 / DSM 4304 / JCM 9628 / NBRC 100126 / VC-16).